The following is a 417-amino-acid chain: uncharacterized protein (417 aa).

2 disordered regions span residues 1-41 (MDSE…EDQA) and 233-262 (QDSA…STRS). Positions 31–41 (DEDHIFHEDQA) are enriched in basic and acidic residues. Residues 235-245 (SAYNDQAPSTS) are compositionally biased toward polar residues.

This is an uncharacterized protein from Caenorhabditis elegans.